A 379-amino-acid polypeptide reads, in one-letter code: Cobalt-precorrin-5B C(1)-methyltransferase (379 aa).

The protein belongs to the CbiD family.

It carries out the reaction Co-precorrin-5B + S-adenosyl-L-methionine = Co-precorrin-6A + S-adenosyl-L-homocysteine. The protein operates within cofactor biosynthesis; adenosylcobalamin biosynthesis; cob(II)yrinate a,c-diamide from sirohydrochlorin (anaerobic route): step 6/10. Functionally, catalyzes the methylation of C-1 in cobalt-precorrin-5B to form cobalt-precorrin-6A. The polypeptide is Cobalt-precorrin-5B C(1)-methyltransferase (Salmonella typhi).